Here is a 302-residue protein sequence, read N- to C-terminus: AP-1 complex-associated regulatory protein (302 aa).

Ser-29 bears the Phosphoserine mark. Residues Asp-78–His-138 are interaction with AP1G1. The stretch at Ile-80–His-138 forms a coiled coil. Positions Cys-188–Leu-206 are enriched in polar residues. A disordered region spans residues Cys-188–Leu-258. A sufficient for association with the Arp2/3 complex region spans residues Gly-199–Gly-215. Residues Pro-221–Leu-233 are compositionally biased toward basic and acidic residues. Ser-226 bears the Phosphoserine mark. A Phosphothreonine modification is found at Thr-228. Positions Lys-242–Ser-255 are enriched in polar residues.

Interacts (via coiled-coil domain) with AP1G1 (via GAE domain). Interacts with KIF5B. Associates with the Arp2/3 complex. In terms of processing, palmitoylated.

It is found in the golgi apparatus. The protein localises to the trans-Golgi network. Its subcellular location is the late endosome. The protein resides in the early endosome. Necessary for adaptor protein complex 1 (AP-1)-dependent transport between the trans-Golgi network and endosomes. Regulates the membrane association of AP1G1/gamma1-adaptin, one of the subunits of the AP-1 adaptor complex. The direct interaction with AP1G1/gamma1-adaptin attenuates the release of the AP-1 complex from membranes. Regulates endosomal membrane traffic via association with AP-1 and KIF5B thus linking kinesin-based plus-end-directed microtubular transport to AP-1-dependent membrane traffic. May act as effector of AP-1 in calcium-induced endo-lysosome secretion. Inhibits Arp2/3 complex function; negatively regulates cell spreading, size and motility via intracellular sequestration of the Arp2/3 complex. In Homo sapiens (Human), this protein is AP-1 complex-associated regulatory protein (AP1AR).